A 537-amino-acid polypeptide reads, in one-letter code: MAMCASPRPFRRVGSAGAAALAAGGAGGAERRGRPAPLQDETLGVASVPSQWRSVQGIRGETKSCQTAGIATAESSAQARTHADAQVQTEAPEEPAAMAPVSQYDTLRLEAFLRRVEAMVIRELNNNWQSHAFDGYEVNWTEQQQTVSCLHTLVYPLAQGQGLHVTGISWNSTGSVLACAYGRLDDGDWSTLKSYVCTWNLDRQGLNPQQPSVVVEVPSAVMCLAFHPTQPSHIAGGLYSGEVLVWDMSRPEDPLLWRTGLTDDTHTDPVYQVLWLPEPRHSHRFQVLSAATDGKVLLWRGSGAGQLRLTKGFALAVQQLPRSTKLKKPPRGETEVGVTSVAFSSFDSSLFVLGTEGGFPLKCSLASEVAALTRMPSSVPLRAPVQFTFSPHGGPVYSVSCSPFHRNLFLSAGTDGHVHLYSMLQAQPLTSLQLSHKYLFAVRWSPVRPLVFAAASGEGDVQLFDLQKSSQKPTVSITQTQDGSPVYCLEFNSQQTQLLAAGDAKGMVKVWQLSTAFTEQGPREVEDLDQLEAEITT.

Position 15 is a phosphoserine (S15). Positions 80-93 (RTHADAQVQTEAPE) are DYNLL2 binding. Residues 107-132 (LRLEAFLRRVEAMVIRELNNNWQSHA) form a DYNLRB1 binding region. WD repeat units follow at residues 216 to 256 (EVPS…DPLL), 265 to 309 (THTD…QLRL), 391 to 431 (PHGG…PLTS), 434 to 474 (LSHK…QKPT), and 481 to 521 (QDGS…TEQG).

This sequence belongs to the dynein light intermediate chain family. In terms of assembly, the cytoplasmic dynein 2 complex consists of two catalytic heavy chains (HCs) and a number of non-catalytic subunits presented by intermediate chains (ICs), light intermediate chains (LICs) and light chains (LCs). Among them, a heavy chain (DYNC2H1), two intermediate chains (DYNC2I2 and DYNC2I1), a light intermediate chain (DYNC2LI1), and a light chain (DYNLT2B) are unique to the cytoplasmic dynein complex 2, but a subset of the light chains are also shared by dynein-1 and dynein-2 complexes. Interacts with DYNC2I1; their C-terminal domains each bind a copy of the heavy chain, and their extended N-terminal regions are held together by an array of light chain dimers. Interacts with DYNLL2; this interaction is essential for dynein-2-mediated retrograde trafficking of ciliary proteins. Interacts with DYNLRB1; this interaction is essential for dynein-2-mediated retrograde trafficking of ciliary proteins. Interacts (via the WD domains) with MAP3K7 and TAB3. Interacts (via WD domains) with TAB2 (via C-terminus). Interacts (via WD domains) with TRAF6 (via TRAF-type domains). In terms of tissue distribution, expressed in brain, thymus, heart, lung, liver, spleen, kidney, testis and intestine.

It is found in the cytoplasm. The protein resides in the cytoskeleton. The protein localises to the cilium basal body. Its subcellular location is the cilium axoneme. It localises to the cell projection. It is found in the cilium. The protein resides in the microtubule organizing center. The protein localises to the centrosome. Its subcellular location is the filopodium. In terms of biological role, acts as one of several non-catalytic accessory components of the cytoplasmic dynein 2 complex (dynein-2 complex), a motor protein complex that drives the movement of cargos along microtubules within cilia and flagella in concert with the intraflagellar transport (IFT) system. DYNC2I2 plays a major role in retrograde ciliary protein trafficking and in ciliogenesis. Required also to maintain a functional transition zone. Functionally, acts as a negative regulator of the Toll-like and IL-1R receptor signaling pathways. Inhibits the MAP3K7-induced NF-kappa-B activation pathway. Inhibits MAP3K7 phosphorylation at 'Thr-184' and 'Thr-187' upon Il-1 beta stimulation. The chain is Cytoplasmic dynein 2 intermediate chain 2 (Dync2i2) from Mus musculus (Mouse).